We begin with the raw amino-acid sequence, 223 residues long: Endonuclease NucS (223 aa).

Belongs to the NucS endonuclease family.

The protein resides in the cytoplasm. In terms of biological role, cleaves both 3' and 5' ssDNA extremities of branched DNA structures. This Mycolicibacterium gilvum (strain PYR-GCK) (Mycobacterium gilvum (strain PYR-GCK)) protein is Endonuclease NucS.